Consider the following 332-residue polypeptide: D-xylose-binding periplasmic protein (332 aa).

An N-terminal signal peptide occupies residues 1–23 (MKIKSALLTLVGALTVFSSSAHS).

The protein belongs to the bacterial solute-binding protein 2 family.

Its subcellular location is the periplasm. Its function is as follows. Involved in the high-affinity D-xylose membrane transport system. Binds with high affinity to xylose. This chain is D-xylose-binding periplasmic protein (xylF), found in Haemophilus influenzae (strain ATCC 51907 / DSM 11121 / KW20 / Rd).